The sequence spans 379 residues: PqqA peptide cyclase (379 aa).

The 213-residue stretch at 8–220 (LPAPIGLLAE…IRVVEEARER (213 aa)) folds into the Radical SAM core domain. [4Fe-4S] cluster contacts are provided by cysteine 22, cysteine 26, and cysteine 29.

The protein belongs to the radical SAM superfamily. PqqE family. Interacts with PqqD. The interaction is necessary for activity of PqqE. [4Fe-4S] cluster serves as cofactor.

It catalyses the reaction [PQQ precursor protein] + S-adenosyl-L-methionine = E-Y cross-linked-[PQQ precursor protein] + 5'-deoxyadenosine + L-methionine + H(+). It participates in cofactor biosynthesis; pyrroloquinoline quinone biosynthesis. Its function is as follows. Catalyzes the cross-linking of a glutamate residue and a tyrosine residue in the PqqA protein as part of the biosynthesis of pyrroloquinoline quinone (PQQ). This is PqqA peptide cyclase from Methylobacterium nodulans (strain LMG 21967 / CNCM I-2342 / ORS 2060).